A 161-amino-acid polypeptide reads, in one-letter code: MPLKMAVYPGSFDPVTYGHLDIIDRGLKIFDGVIVAVARNSEKNALFSVQERIELLTEILKDRPEARVETFDGLLVDYVRRVGASVIIRGLRAVSDFEFEFQLAQMNRNITRDVETLFMMTSVPYSYLSSSIVKEVSCLNGPVDKLVPPLVKSALDAKFRG.

Position 11 (serine 11) interacts with substrate. ATP is bound by residues 11–12 (SF) and histidine 19. The substrate site is built by lysine 43, leucine 75, and arginine 89. Residues 90–92 (GLR), glutamate 100, and 125–131 (YSYLSSS) each bind ATP.

This sequence belongs to the bacterial CoaD family. As to quaternary structure, homohexamer. Requires Mg(2+) as cofactor.

It localises to the cytoplasm. It catalyses the reaction (R)-4'-phosphopantetheine + ATP + H(+) = 3'-dephospho-CoA + diphosphate. The protein operates within cofactor biosynthesis; coenzyme A biosynthesis; CoA from (R)-pantothenate: step 4/5. Its function is as follows. Reversibly transfers an adenylyl group from ATP to 4'-phosphopantetheine, yielding dephospho-CoA (dPCoA) and pyrophosphate. This chain is Phosphopantetheine adenylyltransferase, found in Geobacter sp. (strain M21).